Consider the following 218-residue polypeptide: Octanoyltransferase (218 aa).

The BPL/LPL catalytic domain occupies 32 to 218 (GEAAEAIWLL…LRTFPQHFPD (187 aa)). Substrate contacts are provided by residues 71 to 78 (RGGQYTYH), 151 to 153 (AIG), and 164 to 166 (GLS). The active-site Acyl-thioester intermediate is the Cys-182.

It belongs to the LipB family.

It localises to the cytoplasm. The enzyme catalyses octanoyl-[ACP] + L-lysyl-[protein] = N(6)-octanoyl-L-lysyl-[protein] + holo-[ACP] + H(+). It participates in protein modification; protein lipoylation via endogenous pathway; protein N(6)-(lipoyl)lysine from octanoyl-[acyl-carrier-protein]: step 1/2. Catalyzes the transfer of endogenously produced octanoic acid from octanoyl-acyl-carrier-protein onto the lipoyl domains of lipoate-dependent enzymes. Lipoyl-ACP can also act as a substrate although octanoyl-ACP is likely to be the physiological substrate. The polypeptide is Octanoyltransferase (Cereibacter sphaeroides (strain ATCC 17023 / DSM 158 / JCM 6121 / CCUG 31486 / LMG 2827 / NBRC 12203 / NCIMB 8253 / ATH 2.4.1.) (Rhodobacter sphaeroides)).